Consider the following 419-residue polypeptide: Tyrosine--tRNA ligase 1 (419 aa).

Residue Y35 coordinates L-tyrosine. Residues 40–49 (PTAGSLHIGH) carry the 'HIGH' region motif. L-tyrosine contacts are provided by Y172 and Q176. Positions 232 to 236 (KFGKT) match the 'KMSKS' region motif. Position 235 (K235) interacts with ATP. The S4 RNA-binding domain occupies 353 to 418 (QDLVELLIES…KKHFCLVKRA (66 aa)).

This sequence belongs to the class-I aminoacyl-tRNA synthetase family. TyrS type 1 subfamily. Homodimer.

The protein localises to the cytoplasm. The enzyme catalyses tRNA(Tyr) + L-tyrosine + ATP = L-tyrosyl-tRNA(Tyr) + AMP + diphosphate + H(+). In terms of biological role, catalyzes the attachment of tyrosine to tRNA(Tyr) in a two-step reaction: tyrosine is first activated by ATP to form Tyr-AMP and then transferred to the acceptor end of tRNA(Tyr). This chain is Tyrosine--tRNA ligase 1, found in Vibrio parahaemolyticus serotype O3:K6 (strain RIMD 2210633).